Here is a 350-residue protein sequence, read N- to C-terminus: UDP-N-acetylenolpyruvoylglucosamine reductase (350 aa).

The 172-residue stretch at 24–195 (HVEATARWLL…VAVEFNLPLL (172 aa)) folds into the FAD-binding PCMH-type domain. Residue Arg-172 is part of the active site. The active-site Proton donor is Ser-245. The active site involves Glu-342.

Belongs to the MurB family. FAD is required as a cofactor.

It is found in the cytoplasm. The catalysed reaction is UDP-N-acetyl-alpha-D-muramate + NADP(+) = UDP-N-acetyl-3-O-(1-carboxyvinyl)-alpha-D-glucosamine + NADPH + H(+). It participates in cell wall biogenesis; peptidoglycan biosynthesis. Its function is as follows. Cell wall formation. The protein is UDP-N-acetylenolpyruvoylglucosamine reductase of Xanthomonas oryzae pv. oryzae (strain MAFF 311018).